A 144-amino-acid polypeptide reads, in one-letter code: Large ribosomal subunit protein uL15 (144 aa).

Residues 1–53 (MRLNTLSPAEGAKHAPKRLGRGIGSGLGKTGGRGHKGQKSRSGGGVRRGFEGG) form a disordered region. Positions 21–31 (RGIGSGLGKTG) are enriched in gly residues.

It belongs to the universal ribosomal protein uL15 family. As to quaternary structure, part of the 50S ribosomal subunit.

Binds to the 23S rRNA. This is Large ribosomal subunit protein uL15 from Pectobacterium carotovorum subsp. carotovorum (strain PC1).